The chain runs to 573 residues: MASSSAPVHPARYLSVFLVMLIGIYLLVFFTGDKHTAPKLGIDLQGGTRVTLTARTPDGSAPSREALAQAQQIISARVNGLGVSGSEVVVDGDNLVITVPGNDGSEARNLGQTARLYIRPVLNSMPAQPAAEEPQPAPSAEPQPPGQPAAPPPAQSGAPASPQPGAQPRPYPQDPAPSPNPTSPASPPPAPPAEAPATDPRKDLAERIAQEKKLRQSTNQYMQMVALQFQATRCESDDILAGNDDPKLPLVTCSTDHKTAYLLAPSIISGDQIQNATSGMDQRGIGYVVDLQFKGPAANIWADYTAAHIGTQTAFTLDSQVVSAPQIQEAIPGGRTQISGGDPPFTAATARQLANVLKYGSLPLSFEPSEAQTVSATLGLSSLRAGMIAGAIGLLLVLVYSLLYYRVLGLLTALSLVASGSMVFAILVLLGRYINYTLDLAGIAGLIIGIGTTADSFVVFFERIKDEIREGRSFRSAVPRGWARARKTIVSGNAVTFLAAAVLYFLAIGQVKGFAFTLGLTTILDLVVVFLVTWPLVYLASKSSLLAKPAYNGLGAVQQVARERRAMARTGRG.

A helical transmembrane segment spans residues 13 to 33; that stretch reads YLSVFLVMLIGIYLLVFFTGD. Residues 127–200 are disordered; the sequence is AQPAAEEPQP…PPAEAPATDP (74 aa). Pro residues-rich tracts occupy residues 135 to 154 and 161 to 194; these read QPAP…PPPA and SPQP…PPAE. Transmembrane regions (helical) follow at residues 385 to 405, 410 to 430, 441 to 461, 489 to 509, and 514 to 534; these read AGMI…LLYY, LLTA…LVLL, AGIA…VVFF, IVSG…LAIG, and FAFT…LVTW.

Belongs to the SecD/SecF family. SecD subfamily. In terms of assembly, forms a complex with SecF. Part of the essential Sec protein translocation apparatus which comprises SecA, SecYEG and auxiliary proteins SecDF. Other proteins may also be involved.

Its subcellular location is the cell membrane. Its function is as follows. Part of the Sec protein translocase complex. Interacts with the SecYEG preprotein conducting channel. SecDF uses the proton motive force (PMF) to complete protein translocation after the ATP-dependent function of SecA. This chain is Protein translocase subunit SecD, found in Mycobacterium tuberculosis (strain CDC 1551 / Oshkosh).